The primary structure comprises 211 residues: Uracil phosphoribosyltransferase (211 aa).

Residues Arg78, Arg103, and 130-138 (DPMLATGGS) contribute to the 5-phospho-alpha-D-ribose 1-diphosphate site. Uracil is bound by residues Ile193 and 198–200 (GDA). Asp199 is a 5-phospho-alpha-D-ribose 1-diphosphate binding site.

The protein belongs to the UPRTase family. It depends on Mg(2+) as a cofactor.

It catalyses the reaction UMP + diphosphate = 5-phospho-alpha-D-ribose 1-diphosphate + uracil. It participates in pyrimidine metabolism; UMP biosynthesis via salvage pathway; UMP from uracil: step 1/1. With respect to regulation, allosterically activated by GTP. In terms of biological role, catalyzes the conversion of uracil and 5-phospho-alpha-D-ribose 1-diphosphate (PRPP) to UMP and diphosphate. This chain is Uracil phosphoribosyltransferase, found in Hahella chejuensis (strain KCTC 2396).